We begin with the raw amino-acid sequence, 524 residues long: 2-isopropylmalate synthase (524 aa).

Residues 5-267 (VIIFDTTLRD…HTNIRHSEIH (263 aa)) form the Pyruvate carboxyltransferase domain. Residues Asp-14, His-202, His-204, and Asn-238 each coordinate Mn(2+). Residues 392–524 (KLEYLGVQSG…KTDKINTESV (133 aa)) are regulatory domain.

It belongs to the alpha-IPM synthase/homocitrate synthase family. LeuA type 1 subfamily. Homodimer. Mn(2+) is required as a cofactor.

It is found in the cytoplasm. The catalysed reaction is 3-methyl-2-oxobutanoate + acetyl-CoA + H2O = (2S)-2-isopropylmalate + CoA + H(+). It functions in the pathway amino-acid biosynthesis; L-leucine biosynthesis; L-leucine from 3-methyl-2-oxobutanoate: step 1/4. Functionally, catalyzes the condensation of the acetyl group of acetyl-CoA with 3-methyl-2-oxobutanoate (2-ketoisovalerate) to form 3-carboxy-3-hydroxy-4-methylpentanoate (2-isopropylmalate). This Aeromonas salmonicida (strain A449) protein is 2-isopropylmalate synthase.